Here is a 386-residue protein sequence, read N- to C-terminus: Formate-dependent phosphoribosylglycinamide formyltransferase (386 aa).

Residues 15-16 (EL) and glutamate 75 each bind N(1)-(5-phospho-beta-D-ribosyl)glycinamide. ATP contacts are provided by residues arginine 107, lysine 148, 153-158 (SSGKGQ), 188-191 (EQFI), and glutamate 196. Residues 112–301 (ALAAQQLNLQ…EFELHLRAIV (190 aa)) enclose the ATP-grasp domain. The Mg(2+) site is built by glutamate 260 and glutamate 272. N(1)-(5-phospho-beta-D-ribosyl)glycinamide is bound by residues aspartate 279, lysine 349, and 356–357 (RR).

It belongs to the PurK/PurT family. In terms of assembly, homodimer.

It catalyses the reaction N(1)-(5-phospho-beta-D-ribosyl)glycinamide + formate + ATP = N(2)-formyl-N(1)-(5-phospho-beta-D-ribosyl)glycinamide + ADP + phosphate + H(+). It participates in purine metabolism; IMP biosynthesis via de novo pathway; N(2)-formyl-N(1)-(5-phospho-D-ribosyl)glycinamide from N(1)-(5-phospho-D-ribosyl)glycinamide (formate route): step 1/1. Functionally, involved in the de novo purine biosynthesis. Catalyzes the transfer of formate to 5-phospho-ribosyl-glycinamide (GAR), producing 5-phospho-ribosyl-N-formylglycinamide (FGAR). Formate is provided by PurU via hydrolysis of 10-formyl-tetrahydrofolate. The protein is Formate-dependent phosphoribosylglycinamide formyltransferase of Francisella tularensis subsp. tularensis (strain SCHU S4 / Schu 4).